The sequence spans 92 residues: Small ribosomal subunit protein bS18A (92 aa).

This sequence belongs to the bacterial ribosomal protein bS18 family. In terms of assembly, part of the 30S ribosomal subunit. Forms a tight heterodimer with protein bS6.

Its function is as follows. Binds as a heterodimer with protein bS6 to the central domain of the 16S rRNA, where it helps stabilize the platform of the 30S subunit. The sequence is that of Small ribosomal subunit protein bS18A from Cupriavidus pinatubonensis (strain JMP 134 / LMG 1197) (Cupriavidus necator (strain JMP 134)).